A 314-amino-acid chain; its full sequence is Ribonuclease Z (314 aa).

Zn(2+)-binding residues include histidine 62, histidine 64, aspartate 66, histidine 67, histidine 139, aspartate 210, and histidine 268. The Proton acceptor role is filled by aspartate 66.

Belongs to the RNase Z family. In terms of assembly, homodimer. Zn(2+) is required as a cofactor.

It carries out the reaction Endonucleolytic cleavage of RNA, removing extra 3' nucleotides from tRNA precursor, generating 3' termini of tRNAs. A 3'-hydroxy group is left at the tRNA terminus and a 5'-phosphoryl group is left at the trailer molecule.. Functionally, zinc phosphodiesterase, which displays some tRNA 3'-processing endonuclease activity. Probably involved in tRNA maturation, by removing a 3'-trailer from precursor tRNA. This chain is Ribonuclease Z, found in Rippkaea orientalis (strain PCC 8801 / RF-1) (Cyanothece sp. (strain PCC 8801)).